We begin with the raw amino-acid sequence, 426 residues long: O-methyltransferase pyvH (426 aa).

Residues 258-259, aspartate 281, 308-309, and arginine 323 contribute to the S-adenosyl-L-methionine site; these read GG and DF. Histidine 327 serves as the catalytic Proton acceptor.

Belongs to the class I-like SAM-binding methyltransferase superfamily. Cation-independent O-methyltransferase family.

It functions in the pathway secondary metabolite biosynthesis. Its function is as follows. O-methyltransferase; part of the gene cluster that mediates the biosynthesis of pyranoviolin A, a pyranonigrin analog with a C-3 methoxy group. Initially, the PKS portion of pyvA synthesizes C-10 carbon chain from 5 molecules of malonyl-CoA, which is then condensed with the thiolation (T) domain-bound glycine activated by the adenylation (A) domain. The subsequent chain release by Dieckmann condensation (DKC) could be catalyzed by the TE domain present at the C-terminus of pyvA and/or the alpha/beta hydrolase pyvD, installing the tetramic acid moiety. The FAD-dependent monooxygenase pyvC next epoxidizes one of the olefins of the polyketide part, and the epoxide ring-opening induces the dihydro-gamma-pyrone ring formation. The cytochrome P450 monooxygeanse pyvB would be responsible for the 2 consecutive reactions, in which the dihydro-gamma-pyrone is oxidized to gamma-pyrone and C-7 is hydroxylated to yield pyranonigrin F. Finally, the O-methyltransferase pyvH methylates the C-3 hydroxy group to complete the biosynthesis. The chain is O-methyltransferase pyvH from Aspergillus violaceofuscus (strain CBS 115571).